A 437-amino-acid polypeptide reads, in one-letter code: Methylenetetrahydrofolate--tRNA-(uracil-5-)-methyltransferase TrmFO (437 aa).

Gly-10 to Gly-15 is a binding site for FAD.

The protein belongs to the MnmG family. TrmFO subfamily. FAD is required as a cofactor.

It localises to the cytoplasm. It carries out the reaction uridine(54) in tRNA + (6R)-5,10-methylene-5,6,7,8-tetrahydrofolate + NADH + H(+) = 5-methyluridine(54) in tRNA + (6S)-5,6,7,8-tetrahydrofolate + NAD(+). The catalysed reaction is uridine(54) in tRNA + (6R)-5,10-methylene-5,6,7,8-tetrahydrofolate + NADPH + H(+) = 5-methyluridine(54) in tRNA + (6S)-5,6,7,8-tetrahydrofolate + NADP(+). Its function is as follows. Catalyzes the folate-dependent formation of 5-methyl-uridine at position 54 (M-5-U54) in all tRNAs. The chain is Methylenetetrahydrofolate--tRNA-(uracil-5-)-methyltransferase TrmFO from Geotalea daltonii (strain DSM 22248 / JCM 15807 / FRC-32) (Geobacter daltonii).